Reading from the N-terminus, the 594-residue chain is UvrABC system protein C (594 aa).

The region spanning 14 to 91 is the GIY-YIG domain; it reads DSPGCYLHKD…IQENMPKYNI (78 aa). The 36-residue stretch at 196–231 folds into the UVR domain; the sequence is DKIIDDLRSKMLEASHNQEFERAAEYRDLISGIATM.

Belongs to the UvrC family. As to quaternary structure, interacts with UvrB in an incision complex.

It localises to the cytoplasm. Functionally, the UvrABC repair system catalyzes the recognition and processing of DNA lesions. UvrC both incises the 5' and 3' sides of the lesion. The N-terminal half is responsible for the 3' incision and the C-terminal half is responsible for the 5' incision. The sequence is that of UvrABC system protein C from Streptococcus equi subsp. equi (strain 4047).